Here is a 213-residue protein sequence, read N- to C-terminus: A-type ATP synthase subunit D (213 aa).

The protein belongs to the V-ATPase D subunit family. Has multiple subunits with at least A(3), B(3), C, D, E, F, H, I and proteolipid K(x).

The protein localises to the cell membrane. Component of the A-type ATP synthase that produces ATP from ADP in the presence of a proton gradient across the membrane. The sequence is that of A-type ATP synthase subunit D from Saccharolobus solfataricus (strain ATCC 35092 / DSM 1617 / JCM 11322 / P2) (Sulfolobus solfataricus).